Reading from the N-terminus, the 580-residue chain is Malto-oligosyltrehalose trehalohydrolase (580 aa).

Residues 56 to 88 (LPDPRSARQPDGVHARSQRWEPPGQFGAARTDT) form a disordered region. Over residues 60–69 (RSARQPDGVH) the composition is skewed to basic and acidic residues. Residue 245-250 (RLDAVH) coordinates substrate. Asp-247 acts as the Nucleophile in catalysis. Residue Glu-284 is the Proton donor of the active site. Substrate is bound by residues 309-313 (DDIHH) and 379-384 (HDQVGN).

It belongs to the glycosyl hydrolase 13 family.

The protein localises to the cytoplasm. The catalysed reaction is hydrolysis of (1-&gt;4)-alpha-D-glucosidic linkage in 4-alpha-D-[(1-&gt;4)-alpha-D-glucanosyl]n trehalose to yield trehalose and (1-&gt;4)-alpha-D-glucan.. Its pathway is glycan biosynthesis; trehalose biosynthesis. In terms of biological role, is involved in the biosynthesis of trehalose but not in that of capsular glucan and glycogen. In Mycobacterium tuberculosis (strain CDC 1551 / Oshkosh), this protein is Malto-oligosyltrehalose trehalohydrolase (treZ).